Consider the following 954-residue polypeptide: Translation initiation factor IF-2 (954 aa).

Residues 56–75 (KAAAPAAPKAPAPAAESRPA) show a composition bias toward low complexity. A disordered region spans residues 56 to 355 (KAAAPAAPKA…GVSVPRGDGN (300 aa)). The span at 76-87 (APAPGPAAPKAP) shows a compositional bias: pro residues. Composition is skewed to low complexity over residues 88 to 125 (APKVEAPAPAAPAASAPAAPQASSAAPAAPSTGAKPGA) and 138 to 151 (PRQGGSSQGSSAPR). Over residues 241-254 (PGAPRPGGPRPTPG) the composition is skewed to pro residues. Residues 269–322 (GRPGGGGRGPGRPGAPGTGGPGGGGGAPAGGGFGKGGRGRGGTQGAFGKGGAGR) are compositionally biased toward gly residues. Positions 323-332 (GKQRKSKRAK) are enriched in basic residues. The region spanning 447 to 618 (PRAPVVTVMG…AVLLTADAAL (172 aa)) is the tr-type G domain. Positions 456–463 (GHVDHGKT) are G1. 456 to 463 (GHVDHGKT) contacts GTP. A G2 region spans residues 481–485 (GITQH). The interval 506 to 509 (DTPG) is G3. Residues 506-510 (DTPGH) and 560-563 (NKID) contribute to the GTP site. A G4 region spans residues 560 to 563 (NKID). The tract at residues 596–598 (SAR) is G5.

This sequence belongs to the TRAFAC class translation factor GTPase superfamily. Classic translation factor GTPase family. IF-2 subfamily.

It localises to the cytoplasm. In terms of biological role, one of the essential components for the initiation of protein synthesis. Protects formylmethionyl-tRNA from spontaneous hydrolysis and promotes its binding to the 30S ribosomal subunits. Also involved in the hydrolysis of GTP during the formation of the 70S ribosomal complex. The sequence is that of Translation initiation factor IF-2 from Pseudarthrobacter chlorophenolicus (strain ATCC 700700 / DSM 12829 / CIP 107037 / JCM 12360 / KCTC 9906 / NCIMB 13794 / A6) (Arthrobacter chlorophenolicus).